The chain runs to 175 residues: Co-chaperone protein HscB homolog (175 aa).

A J domain is found at 7-79 (SHFDLFHLPA…LKRATYLLSL (73 aa)).

This sequence belongs to the HscB family. As to quaternary structure, interacts with HscA and stimulates its ATPase activity.

Functionally, co-chaperone involved in the maturation of iron-sulfur cluster-containing proteins. Seems to help targeting proteins to be folded toward HscA. This Burkholderia multivorans (strain ATCC 17616 / 249) protein is Co-chaperone protein HscB homolog.